Consider the following 186-residue polypeptide: Early nodulin-like protein 13 (186 aa).

Residues 1 to 23 (MAQRTLVATFFLIFFLLTNLVCS) form the signal peptide. Residues 24–128 (KEIIVGGKTS…GEKLHIVVMS (105 aa)) form the Phytocyanin domain. An intrachain disulfide couples C82 to C116. Residues N83 and N90 are each glycosylated (N-linked (GlcNAc...) asparagine). A165 is lipidated: GPI-anchor amidated alanine. A propeptide spans 166-186 (SSLTRQVGVLGFVGLLAIVLL) (removed in mature form).

It belongs to the early nodulin-like (ENODL) family. In terms of tissue distribution, mostly expressed in seedlings, siliques and flowers, and, to a lower extent, in roots, stems and seeds, but barely in leaves.

The protein resides in the cell membrane. Its function is as follows. May act as a carbohydrate transporter. Required, together with ENODL11, ENODL12, ENODL13, ENODL14 and ENODL15, for male-female communication and pollen tube reception and burst at the synergid cell surface of the female gametophyte. This is Early nodulin-like protein 13 from Arabidopsis thaliana (Mouse-ear cress).